Here is a 136-residue protein sequence, read N- to C-terminus: Small ribosomal subunit protein uS19 (136 aa).

It belongs to the universal ribosomal protein uS19 family.

Functionally, protein S19 forms a complex with S13 that binds strongly to the 16S ribosomal RNA. This is Small ribosomal subunit protein uS19 from Methanosarcina mazei (strain ATCC BAA-159 / DSM 3647 / Goe1 / Go1 / JCM 11833 / OCM 88) (Methanosarcina frisia).